A 423-amino-acid polypeptide reads, in one-letter code: Polyglutamylase complex subunit TTLL1 (423 aa).

A TTL domain is found at 1–367; it reads MAGRVKWVTD…NGEIPDCKWN (367 aa). ATP-binding positions include Lys-138, 144-145, 181-184, and 194-196; these read QG, SLYI, and KFD. Gln-144 lines the a protein pocket. Arg-220 provides a ligand contact to L-glutamate. 241 to 242 is an ATP binding site; the sequence is TN. Position 259 (Lys-259) interacts with L-glutamate. The Mg(2+) site is built by Asp-313, Glu-326, and Asn-328. An L-glutamate-binding site is contributed by Lys-344. Residues 390–423 form a disordered region; that stretch reads DGAERELRSRPGQPVGPRTGRSRDSGRNVLTTWK.

Belongs to the tubulin polyglutamylase family. Part of the neuronal tubulin polyglutamylase complex which contains TPGS1, TPGS2, TTLL1, LRRC49 and NICN1. Interacts with PCM1, CSTPP1 and LRRC49. Mg(2+) serves as cofactor.

It localises to the cytoplasm. Its subcellular location is the cytoskeleton. It is found in the cilium basal body. The protein localises to the cilium axoneme. The protein resides in the cell projection. It localises to the cilium. Its subcellular location is the flagellum. The enzyme catalyses (L-glutamyl)(n)-gamma-L-glutamyl-L-glutamyl-[protein] + L-glutamate + ATP = (L-glutamyl)(n+1)-gamma-L-glutamyl-L-glutamyl-[protein] + ADP + phosphate + H(+). In terms of biological role, catalytic subunit of a polyglutamylase complex which modifies tubulin, generating side chains of glutamate on the gamma-carboxyl group of specific glutamate residues within the C-terminal tail of tubulin. Probably involved in the side-chain elongation step of the polyglutamylation reaction rather than the initiation step. Modifies both alpha- and beta-tubulins with a preference for the alpha-tail. Unlike most polyglutamylases of the tubulin--tyrosine ligase family, only displays a catalytic activity when in complex with other proteins as it is most likely lacking domains important for autonomous activity. Part of the neuronal tubulin polyglutamylase complex. Mediates cilia and flagella polyglutamylation which is essential for their biogenesis and motility. Involved in respiratory motile cilia function through the regulation of beating asymmetry. Essential for sperm flagella biogenesis, motility and male fertility. Involved in KLF4 glutamylation which impedes its ubiquitination, thereby leading to somatic cell reprogramming, pluripotency maintenance and embryogenesis. The protein is Polyglutamylase complex subunit TTLL1 (Ttll1) of Rattus norvegicus (Rat).